Reading from the N-terminus, the 591-residue chain is Aspartate--tRNA(Asp/Asn) ligase (591 aa).

E175 contacts L-aspartate. An aspartate region spans residues 199-202 (QQFK). Residues R221 and H453 each contribute to the L-aspartate site. 221–223 (RDE) lines the ATP pocket. E486 contributes to the ATP binding site. Residue R493 coordinates L-aspartate. 538 to 541 (GIDR) is a binding site for ATP.

It belongs to the class-II aminoacyl-tRNA synthetase family. Type 1 subfamily. In terms of assembly, homodimer.

The protein resides in the cytoplasm. It catalyses the reaction tRNA(Asx) + L-aspartate + ATP = L-aspartyl-tRNA(Asx) + AMP + diphosphate. Aspartyl-tRNA synthetase with relaxed tRNA specificity since it is able to aspartylate not only its cognate tRNA(Asp) but also tRNA(Asn). Reaction proceeds in two steps: L-aspartate is first activated by ATP to form Asp-AMP and then transferred to the acceptor end of tRNA(Asp/Asn). The chain is Aspartate--tRNA(Asp/Asn) ligase from Cereibacter sphaeroides (strain ATCC 17029 / ATH 2.4.9) (Rhodobacter sphaeroides).